The chain runs to 203 residues: Pro-FMRFamide-related neuropeptide VF (203 aa).

The N-terminal stretch at 1-26 is a signal peptide; that stretch reads MEIISSKRFILLTLATSSFLTSNTLC. The propeptide occupies 27 to 57; sequence SDELMMPHFHSKEGYGKYYQLRGIPKGVKER. Residue Phe94 is modified to Phenylalanine amide. Positions 97–106 are excised as a propeptide; it reads NIEDRRSPRA. Phe125 bears the Phenylalanine amide mark. Residues 128 to 203 constitute a propeptide that is removed on maturation; the sequence is TTARRITKTL…QPVLQGAMKL (76 aa). The interval 161–186 is disordered; sequence HQEIQSPGQEQPRKRVFTETDDAERK. Residues 171 to 186 are compositionally biased toward basic and acidic residues; it reads QPRKRVFTETDDAERK.

Belongs to the FARP (FMRFamide related peptide) family. As to expression, isoform 1 is expressed at high levels in the hypothalamus and eye. Isoform 2 is specifically expressed in a region between the dorsomedial hypothalamic and ventromedial hypothalamic nuclei.

It is found in the secreted. Its function is as follows. Efficiently inhibits forskolin-induced production of cAMP. Acts as a potent negative regulator of gonadotropin synthesis and secretion. Induces secretion of prolactin. In terms of biological role, efficiently inhibits forskolin-induced production of cAMP. Blocks morphine-induced analgesia. The polypeptide is Pro-FMRFamide-related neuropeptide VF (Npvf) (Rattus norvegicus (Rat)).